The chain runs to 395 residues: Demethylmacrocin O-methyltransferase (395 aa).

The enzyme catalyses demethylmacrocin + S-adenosyl-L-methionine = macrocin + S-adenosyl-L-homocysteine + H(+). It participates in antibiotic biosynthesis; tylosin biosynthesis. Its function is as follows. O-methyltransferase that catalyzes the conversion of demethylmacrocin to macrocin, the penultimate step of tylosin antibiotic biosynthesis. Also able to mediate the conversion of demethyllactenocin to lactenocin. This chain is Demethylmacrocin O-methyltransferase (tylE), found in Streptomyces fradiae (Streptomyces roseoflavus).